Here is an 86-residue protein sequence, read N- to C-terminus: Beta-toxin Tz1 (86 aa).

Positions 1-20 (MTRFVLFICCFFLIGMVVEC) are cleaved as a signal peptide. The LCN-type CS-alpha/beta domain occupies 21–83 (KDGYLVGNDG…TWDRATNRCG (63 aa)). 4 disulfide bridges follow: Cys-31–Cys-82, Cys-35–Cys-57, Cys-43–Cys-63, and Cys-47–Cys-65. Arg-84 is modified (arginine amide).

This sequence belongs to the long (4 C-C) scorpion toxin superfamily. Sodium channel inhibitor family. Beta subfamily. Expressed by the venom gland.

It localises to the secreted. Beta toxins bind voltage-independently at site-4 of sodium channels (Nav) and shift the voltage of activation toward more negative potentials thereby affecting sodium channel activation and promoting spontaneous and repetitive firing. Strongly affects skeletal muscle channels Nav1.4/SCN4A, poorly affects the neuronal channels Nav1.6/SCN8A and Nav1.2/SCN2A. Induces spastic paralysis of rear limbs, increased salivation, apnea, tachycardia and increased perspiration. This Tityus zulianus (Venezuelan scorpion) protein is Beta-toxin Tz1.